Reading from the N-terminus, the 515-residue chain is 1-pyrroline-5-carboxylate dehydrogenase (515 aa).

Residues E286 and C320 contribute to the active site.

Belongs to the aldehyde dehydrogenase family. RocA subfamily.

The catalysed reaction is L-glutamate 5-semialdehyde + NAD(+) + H2O = L-glutamate + NADH + 2 H(+). Its pathway is amino-acid degradation; L-proline degradation into L-glutamate; L-glutamate from L-proline: step 2/2. In Bacillus anthracis (strain A0248), this protein is 1-pyrroline-5-carboxylate dehydrogenase.